Consider the following 286-residue polypeptide: Mating type protein A-1 (286 aa).

A DNA-binding region (alpha box) is located at residues 40 to 95; sequence AAKKKVNGFMSFRSYYSPLFSQLPQKERSPFMTILWQHDPFHNEWNFMCSVYSSIR.

Belongs to the MATALPHA1 family.

Its subcellular location is the nucleus. Functionally, required for expression of the heterokaryon incompatibility and sexual functions. The chain is Mating type protein A-1 (MTA-1) from Neurospora africana.